The sequence spans 337 residues: Protein ABHD13 (337 aa).

The chain crosses the membrane as a helical; Signal-anchor for type II membrane protein span at residues 37 to 57 (FHLYGGIILLLLIFISIAGIL). Residues Ser193, Asp268, and His298 each act as charge relay system in the active site. An N-linked (GlcNAc...) asparagine glycan is attached at Asn299.

The protein belongs to the serine esterase family.

The protein resides in the membrane. This chain is Protein ABHD13, found in Homo sapiens (Human).